The chain runs to 396 residues: S-arrestin (396 aa).

Belongs to the arrestin family.

Arrestin is one of the major proteins of the ros (retinal rod outer segments); it binds to photoactivated-phosphorylated rhodopsin, thereby apparently preventing the transducin-mediated activation of phosphodiesterase. The chain is S-arrestin from Aquarana catesbeiana (American bullfrog).